Consider the following 436-residue polypeptide: 3-ketoacyl-CoA thiolase (436 aa).

The Acyl-thioester intermediate role is filled by Cys-99. Catalysis depends on proton acceptor residues His-392 and Cys-422.

Belongs to the thiolase-like superfamily. Thiolase family. Heterotetramer of two alpha chains (FadJ) and two beta chains (FadI).

Its subcellular location is the cytoplasm. It carries out the reaction an acyl-CoA + acetyl-CoA = a 3-oxoacyl-CoA + CoA. The protein operates within lipid metabolism; fatty acid beta-oxidation. Catalyzes the final step of fatty acid oxidation in which acetyl-CoA is released and the CoA ester of a fatty acid two carbons shorter is formed. This is 3-ketoacyl-CoA thiolase from Shewanella putrefaciens (strain CN-32 / ATCC BAA-453).